The primary structure comprises 419 residues: Gamma-glutamyl phosphate reductase (419 aa).

This sequence belongs to the gamma-glutamyl phosphate reductase family.

It is found in the cytoplasm. It catalyses the reaction L-glutamate 5-semialdehyde + phosphate + NADP(+) = L-glutamyl 5-phosphate + NADPH + H(+). It functions in the pathway amino-acid biosynthesis; L-proline biosynthesis; L-glutamate 5-semialdehyde from L-glutamate: step 2/2. In terms of biological role, catalyzes the NADPH-dependent reduction of L-glutamate 5-phosphate into L-glutamate 5-semialdehyde and phosphate. The product spontaneously undergoes cyclization to form 1-pyrroline-5-carboxylate. The polypeptide is Gamma-glutamyl phosphate reductase (Ruthia magnifica subsp. Calyptogena magnifica).